Reading from the N-terminus, the 75-residue chain is DNA-directed RNA polymerase subunit omega (75 aa).

This sequence belongs to the RNA polymerase subunit omega family. In cyanobacteria the RNAP catalytic core is composed of 2 alpha, 1 beta, 1 beta', 1 gamma and 1 omega subunit. When a sigma factor is associated with the core the holoenzyme is formed, which can initiate transcription.

The enzyme catalyses RNA(n) + a ribonucleoside 5'-triphosphate = RNA(n+1) + diphosphate. Its function is as follows. Promotes RNA polymerase assembly. Latches the N- and C-terminal regions of the beta' subunit thereby facilitating its interaction with the beta and alpha subunits. The protein is DNA-directed RNA polymerase subunit omega of Synechococcus sp. (strain CC9605).